The chain runs to 398 residues: DJ-1 protein homolog E (398 aa).

2 PfpI endopeptidase domains span residues 7–199 (KSAL…ESLG) and 210–393 (ASVL…TALG).

The protein belongs to the peptidase C56 family. In terms of assembly, homotrimer. As to expression, expressed in roots and cauline leaves.

Functionally, may be involved in oxidative stress response. The protein is DJ-1 protein homolog E (DJ1E) of Arabidopsis thaliana (Mouse-ear cress).